A 208-amino-acid chain; its full sequence is MVEWIEIQYPIEYGEAYKMMKSRLTGILNGTASEAVFILEHQDVYTAGISAKNDELLNCYDIPVHHTDRGGKFTYHGPGQIIIYPVINLAVNGRVKDIRNYVNNLASLVINSLKFFNITGITVQDTIGVWIDSEFGRKKIASIGVRIHKWITYHGVAINVCPDLKKFKGIIPCGDRDTIVTSISELLDQKIDLDYYKAILKQEFYKIF.

The 179-residue stretch at 30 to 208 (GTASEAVFIL…ILKQEFYKIF (179 aa)) folds into the BPL/LPL catalytic domain. Residues 69-76 (RGGKFTYH), 142-144 (SIG), and 155-157 (GVA) contribute to the substrate site. C173 functions as the Acyl-thioester intermediate in the catalytic mechanism.

Belongs to the LipB family.

Its subcellular location is the cytoplasm. It carries out the reaction octanoyl-[ACP] + L-lysyl-[protein] = N(6)-octanoyl-L-lysyl-[protein] + holo-[ACP] + H(+). It functions in the pathway protein modification; protein lipoylation via endogenous pathway; protein N(6)-(lipoyl)lysine from octanoyl-[acyl-carrier-protein]: step 1/2. Catalyzes the transfer of endogenously produced octanoic acid from octanoyl-acyl-carrier-protein onto the lipoyl domains of lipoate-dependent enzymes. Lipoyl-ACP can also act as a substrate although octanoyl-ACP is likely to be the physiological substrate. This Orientia tsutsugamushi (strain Ikeda) (Rickettsia tsutsugamushi) protein is Octanoyltransferase.